Here is a 779-residue protein sequence, read N- to C-terminus: Mesenchyme-specific cell surface glycoprotein (779 aa).

The first 15 residues, 1–15, serve as a signal peptide directing secretion; that stretch reads MQFGVPLLVLCLALG. Residues Asn-203 and Asn-234 are each glycosylated (N-linked (GlcNAc...) asparagine). Positions 249-363 are disordered; sequence AGFPRGTTWS…QYPMIPTTPL (115 aa). The segment covering 262 to 351 has biased composition (gly residues); the sequence is GAGGQGGQGQ…GGQGGQGGGN (90 aa). 3 N-linked (GlcNAc...) asparagine glycosylation sites follow: Asn-369, Asn-451, and Asn-609.

Restricted to the primary mesenchyme cell lineage.

It is found in the cell membrane. Not known. Could be involved in mesenchyme cell migration, adhesion, fusion, or spicule formation. This Strongylocentrotus purpuratus (Purple sea urchin) protein is Mesenchyme-specific cell surface glycoprotein.